We begin with the raw amino-acid sequence, 240 residues long: Uridylate kinase (240 aa).

Residue 12–15 (KLSG) coordinates ATP. The tract at residues 20–25 (GDQGKG) is involved in allosteric activation by GTP. Glycine 54 is a binding site for UMP. 2 residues coordinate ATP: glycine 55 and arginine 59. Residues aspartate 74 and 135-142 (TGSPYFST) contribute to the UMP site. Positions 163, 169, and 172 each coordinate ATP.

It belongs to the UMP kinase family. In terms of assembly, homohexamer.

The protein resides in the cytoplasm. It carries out the reaction UMP + ATP = UDP + ADP. It participates in pyrimidine metabolism; CTP biosynthesis via de novo pathway; UDP from UMP (UMPK route): step 1/1. With respect to regulation, allosterically activated by GTP. Inhibited by UTP. Catalyzes the reversible phosphorylation of UMP to UDP. This Ligilactobacillus salivarius (strain UCC118) (Lactobacillus salivarius) protein is Uridylate kinase.